The sequence spans 870 residues: LPS-assembly protein LptD (870 aa).

Residues 1–25 form the signal peptide; it reads MKQGKSFIFYCLVLLLCGFQQLSSA.

This sequence belongs to the LptD family. Component of the lipopolysaccharide transport and assembly complex. Interacts with LptE and LptA.

The protein localises to the cell outer membrane. In terms of biological role, together with LptE, is involved in the assembly of lipopolysaccharide (LPS) at the surface of the outer membrane. The polypeptide is LPS-assembly protein LptD (Coxiella burnetii (strain RSA 493 / Nine Mile phase I)).